We begin with the raw amino-acid sequence, 569 residues long: Peroxisomal targeting signal receptor (569 aa).

Cys5 is covalently cross-linked (Glycyl cysteine thioester (Cys-Gly) (interchain with G-Cter in ubiquitin)). The tract at residues 6 to 28 (SVGANPLAQLNKRVQQDRTLQHG) is amphipathic helix 1 (AH1). A Glycyl lysine isopeptide (Lys-Gly) (interchain with G-Cter in ubiquitin) cross-link involves residue Lys17. The tract at residues 53-71 (KFQMEQFMAGKASSGGNMF) is amphipathic helix 2 (AH2). Residues 112–116 (WSQEF) carry the WxxxF/Y motif 1 motif. The interval 150-154 (PMNMM) is amphipathic helix 3 (AH3). A WxxxF/Y motif 2 motif is present at residues 181 to 185 (WEQQF). The amphipathic helix 4 (AH4) stretch occupies residues 229-245 (FQQIWNDIHDQTDDLDS). TPR repeat units follow at residues 281 to 315 (NTDAYKIGCILMENGAKLSEAALAFEAAVQQDPGH), 316 to 349 (VDAWLRLGLVQTQNEKELSGINALEQCLKADPHN), 417 to 450 (PDVQLGLGILFYANEDFDKTIDCFRAALAVRPDD), 452 to 484 (CMWNRLGASLANSNRSEEAIQAYHRAIQLKPTF), and 486 to 518 (RARYNLAVSSMNIGCYREAAEHLLTALSMHEVE).

It belongs to the peroxisomal targeting signal receptor family. In terms of assembly, interacts (via WxxxF/Y and LVxEF motifs) with PEX14; promoting translocation through the PEX13-PEX14 docking complex. Monoubiquitinated at Cys-5 by PEX2 during PEX5 passage through the retrotranslocation channel: monoubiquitination acts as a signal for PEX5 extraction and is required for proper export from peroxisomes and recycling. When PEX5 recycling is compromised, polyubiquitinated at Lys-17 by PEX10 during its passage through the retrotranslocation channel, leading to its degradation.

The protein resides in the cytoplasm. The protein localises to the cytosol. It localises to the peroxisome matrix. Receptor that mediates peroxisomal import of proteins containing a C-terminal PTS1-type tripeptide peroxisomal targeting signal (SKL-type). Binds to cargo proteins containing a PTS1 peroxisomal targeting signal in the cytosol, and translocates them into the peroxisome matrix by passing through the PEX13-PEX14 docking complex along with cargo proteins. PEX5 receptor is then retrotranslocated into the cytosol, leading to release of bound cargo in the peroxisome matrix, and reset for a subsequent peroxisome import cycle. This Eremothecium gossypii (strain ATCC 10895 / CBS 109.51 / FGSC 9923 / NRRL Y-1056) (Yeast) protein is Peroxisomal targeting signal receptor (PEX5).